The following is a 556-amino-acid chain: Formate--tetrahydrofolate ligase (556 aa).

64–71 (TPAGEGKT) is an ATP binding site.

Belongs to the formate--tetrahydrofolate ligase family.

The enzyme catalyses (6S)-5,6,7,8-tetrahydrofolate + formate + ATP = (6R)-10-formyltetrahydrofolate + ADP + phosphate. Its pathway is one-carbon metabolism; tetrahydrofolate interconversion. The sequence is that of Formate--tetrahydrofolate ligase from Actinobacillus pleuropneumoniae serotype 5b (strain L20).